The following is a 146-amino-acid chain: Prefoldin subunit alpha (146 aa).

The protein belongs to the prefoldin alpha subunit family. Heterohexamer of two alpha and four beta subunits.

It localises to the cytoplasm. Molecular chaperone capable of stabilizing a range of proteins. Seems to fulfill an ATP-independent, HSP70-like function in archaeal de novo protein folding. This Methanococcus vannielii (strain ATCC 35089 / DSM 1224 / JCM 13029 / OCM 148 / SB) protein is Prefoldin subunit alpha.